A 271-amino-acid chain; its full sequence is Bifunctional protein FolD (271 aa).

NADP(+)-binding positions include 154–156 (GRS), Thr181, and Ile222.

Belongs to the tetrahydrofolate dehydrogenase/cyclohydrolase family. As to quaternary structure, homodimer.

The enzyme catalyses (6R)-5,10-methylene-5,6,7,8-tetrahydrofolate + NADP(+) = (6R)-5,10-methenyltetrahydrofolate + NADPH. The catalysed reaction is (6R)-5,10-methenyltetrahydrofolate + H2O = (6R)-10-formyltetrahydrofolate + H(+). It participates in one-carbon metabolism; tetrahydrofolate interconversion. Functionally, catalyzes the oxidation of 5,10-methylenetetrahydrofolate to 5,10-methenyltetrahydrofolate and then the hydrolysis of 5,10-methenyltetrahydrofolate to 10-formyltetrahydrofolate. The polypeptide is Bifunctional protein FolD (Thermosipho africanus (strain TCF52B)).